A 287-amino-acid polypeptide reads, in one-letter code: 23S rRNA (uridine(2479)-2'-O)-methyltransferase (287 aa).

S-adenosyl-L-methionine contacts are provided by residues 210–211, Gly232, and 252–254; these read TD and IPM.

This sequence belongs to the class IV-like SAM-binding methyltransferase superfamily. RNA methyltransferase TsnR/AvirB family. Homodimer.

The enzyme catalyses uridine(2479) in 23S rRNA + S-adenosyl-L-methionine = 2'-O-methyluridine(2479) in 23S rRNA + S-adenosyl-L-homocysteine + H(+). Functionally, specifically methylates the 2'-O-ribose position of uridine-2479 in 23S ribosomal RNA. Confers resistance to antibiotic avilamycin, an orthosomycin antibiotic. The polypeptide is 23S rRNA (uridine(2479)-2'-O)-methyltransferase (aviRb) (Streptomyces viridochromogenes).